The chain runs to 202 residues: ATP-dependent Clp protease proteolytic subunit 1 (202 aa).

S102 serves as the catalytic Nucleophile. H127 is an active-site residue.

Belongs to the peptidase S14 family. In terms of assembly, fourteen ClpP subunits assemble into 2 heptameric rings which stack back to back to give a disk-like structure with a central cavity, resembling the structure of eukaryotic proteasomes.

The protein resides in the cytoplasm. The catalysed reaction is Hydrolysis of proteins to small peptides in the presence of ATP and magnesium. alpha-casein is the usual test substrate. In the absence of ATP, only oligopeptides shorter than five residues are hydrolyzed (such as succinyl-Leu-Tyr-|-NHMec, and Leu-Tyr-Leu-|-Tyr-Trp, in which cleavage of the -Tyr-|-Leu- and -Tyr-|-Trp bonds also occurs).. In terms of biological role, cleaves peptides in various proteins in a process that requires ATP hydrolysis. Has a chymotrypsin-like activity. Plays a major role in the degradation of misfolded proteins. In Agrobacterium fabrum (strain C58 / ATCC 33970) (Agrobacterium tumefaciens (strain C58)), this protein is ATP-dependent Clp protease proteolytic subunit 1.